We begin with the raw amino-acid sequence, 401 residues long: Patatin-like protein 4 (401 aa).

A PNPLA domain is found at 17–218 (LSLDGGGVRG…TANDPTLVGM (202 aa)). Residues 21-26 (GGGVRG) carry the GXGXXG motif. Residues 60–64 (GTSTG) carry the GXSXG motif. The active-site Nucleophile is Ser-62. Asp-205 (proton acceptor) is an active-site residue. The short motif at 205–207 (DGG) is the DGA/G element.

The protein belongs to the patatin family.

In terms of biological role, possesses non-specific lipolytic acyl hydrolase (LAH) activity. Hydrolyzes phospholipids as well as galactolipids. May play a role in disease resistance. This chain is Patatin-like protein 4 (PLP4), found in Arabidopsis thaliana (Mouse-ear cress).